The primary structure comprises 317 residues: Small ribosomal subunit protein uS2 (317 aa).

At serine 2 the chain carries N-acetylserine. Laminin-binding stretches follow at residues 161 to 180 and 205 to 229; these read IPCNNKGHHSVGLMWWMLSR and RDPEEIEKEEQAAAEKAVGKEEFQG. 2 [DE]-W-[ST] repeats span residues 230-232 and 245-247; these read EWT and DWS. The tract at residues 242–317 is laminin-binding; the sequence is EVADWSEGVA…EWGGASADWS (76 aa). Residues 271 to 284 show a composition bias toward low complexity; the sequence is EAAAPSKAPAAAEG. Positions 271–317 are disordered; the sequence is EAAAPSKAPAAAEGFAEDWSAQPATEDWSAAPTAQATEWGGASADWS. [DE]-W-[ST] repeat units lie at residues 288–290, 297–299, and 315–317; these read DWS.

Belongs to the universal ribosomal protein uS2 family. In terms of assembly, monomer (37LRP) and homodimer (67LR). Component of the small ribosomal subunit. Mature ribosomes consist of a small (40S) and a large (60S) subunit. The 40S subunit contains about 33 different proteins and 1 molecule of RNA (18S). The 60S subunit contains about 49 different proteins and 3 molecules of RNA (28S, 5.8S and 5S). Interacts with rps21. Interacts with several laminins including at least lamb1. Interacts with mdk. In terms of processing, acylated. Acylation may be a prerequisite for conversion of the monomeric 37 kDa laminin receptor precursor (37LRP) to the mature dimeric 67 kDa laminin receptor (67LR), and may provide a mechanism for membrane association. Post-translationally, cleaved by stromelysin-3 (ST3) at the cell surface. Cleavage by stromelysin-3 may be a mechanism to alter cell-extracellular matrix interactions.

Its subcellular location is the cell membrane. The protein localises to the cytoplasm. It is found in the nucleus. Functionally, required for the assembly and/or stability of the 40S ribosomal subunit. Required for the processing of the 20S rRNA-precursor to mature 18S rRNA in a late step of the maturation of 40S ribosomal subunits. Also functions as a cell surface receptor for laminin. Plays a role in cell adhesion to the basement membrane and in the consequent activation of signaling transduction pathways. May play a role in cell fate determination and tissue morphogenesis. In Salmo salar (Atlantic salmon), this protein is Small ribosomal subunit protein uS2 (rpsa).